Reading from the N-terminus, the 701-residue chain is Elongation factor G 2 (701 aa).

Positions 8 to 291 constitute a tr-type G domain; that stretch reads ERYRNIGISA…AVIDYLPSPA (284 aa). Residues 17 to 24, 88 to 92, and 142 to 145 contribute to the GTP site; these read AHIDAGKT, DTPGH, and NKMD.

This sequence belongs to the TRAFAC class translation factor GTPase superfamily. Classic translation factor GTPase family. EF-G/EF-2 subfamily.

The protein resides in the cytoplasm. Its function is as follows. Catalyzes the GTP-dependent ribosomal translocation step during translation elongation. During this step, the ribosome changes from the pre-translocational (PRE) to the post-translocational (POST) state as the newly formed A-site-bound peptidyl-tRNA and P-site-bound deacylated tRNA move to the P and E sites, respectively. Catalyzes the coordinated movement of the two tRNA molecules, the mRNA and conformational changes in the ribosome. This Burkholderia lata (strain ATCC 17760 / DSM 23089 / LMG 22485 / NCIMB 9086 / R18194 / 383) protein is Elongation factor G 2.